Here is a 70-residue protein sequence, read N- to C-terminus: Small ribosomal subunit protein bS21B (70 aa).

Residues 37 to 70 form a disordered region; the sequence is SYEKPTTERKRKKAAAVARLRKQVRRSMPPKKKY. Residues 45–70 show a composition bias toward basic residues; that stretch reads RKRKKAAAVARLRKQVRRSMPPKKKY.

This sequence belongs to the bacterial ribosomal protein bS21 family.

In Burkholderia pseudomallei (strain K96243), this protein is Small ribosomal subunit protein bS21B.